Reading from the N-terminus, the 238-residue chain is tRNA1(Val) (adenine(37)-N6)-methyltransferase (238 aa).

It belongs to the methyltransferase superfamily. tRNA (adenine-N(6)-)-methyltransferase family.

Its subcellular location is the cytoplasm. It carries out the reaction adenosine(37) in tRNA1(Val) + S-adenosyl-L-methionine = N(6)-methyladenosine(37) in tRNA1(Val) + S-adenosyl-L-homocysteine + H(+). Its function is as follows. Specifically methylates the adenine in position 37 of tRNA(1)(Val) (anticodon cmo5UAC). In Cytophaga hutchinsonii (strain ATCC 33406 / DSM 1761 / CIP 103989 / NBRC 15051 / NCIMB 9469 / D465), this protein is tRNA1(Val) (adenine(37)-N6)-methyltransferase.